The sequence spans 119 residues: Putative membrane protein insertion efficiency factor (119 aa).

The protein belongs to the UPF0161 family.

It is found in the cell inner membrane. Its function is as follows. Could be involved in insertion of integral membrane proteins into the membrane. The chain is Putative membrane protein insertion efficiency factor from Brucella anthropi (strain ATCC 49188 / DSM 6882 / CCUG 24695 / JCM 21032 / LMG 3331 / NBRC 15819 / NCTC 12168 / Alc 37) (Ochrobactrum anthropi).